The following is a 451-amino-acid chain: Bifunctional protein GlmU (451 aa).

The pyrophosphorylase stretch occupies residues 1–236 (MDQTPSYSPP…YEELRGINSK (236 aa)). UDP-N-acetyl-alpha-D-glucosamine contacts are provided by residues 17-20 (LAAG), lysine 31, glutamine 79, 84-85 (GT), 105-107 (YGD), glycine 144, glutamate 162, asparagine 177, and asparagine 234. Aspartate 107 provides a ligand contact to Mg(2+). Asparagine 234 serves as a coordination point for Mg(2+). Positions 237-257 (VELAEAEATVQIVLRRKALEN) are linker. Residues 258–451 (GVTMTAPETV…EIRRQLKGSV (194 aa)) form an N-acetyltransferase region. Residues arginine 323 and lysine 341 each coordinate UDP-N-acetyl-alpha-D-glucosamine. Catalysis depends on histidine 353, which acts as the Proton acceptor. 2 residues coordinate UDP-N-acetyl-alpha-D-glucosamine: tyrosine 356 and asparagine 367. Residues alanine 370, 376–377 (NY), serine 395, alanine 413, and arginine 430 each bind acetyl-CoA.

The protein in the N-terminal section; belongs to the N-acetylglucosamine-1-phosphate uridyltransferase family. It in the C-terminal section; belongs to the transferase hexapeptide repeat family. As to quaternary structure, homotrimer. It depends on Mg(2+) as a cofactor.

The protein localises to the cytoplasm. It catalyses the reaction alpha-D-glucosamine 1-phosphate + acetyl-CoA = N-acetyl-alpha-D-glucosamine 1-phosphate + CoA + H(+). It carries out the reaction N-acetyl-alpha-D-glucosamine 1-phosphate + UTP + H(+) = UDP-N-acetyl-alpha-D-glucosamine + diphosphate. It functions in the pathway nucleotide-sugar biosynthesis; UDP-N-acetyl-alpha-D-glucosamine biosynthesis; N-acetyl-alpha-D-glucosamine 1-phosphate from alpha-D-glucosamine 6-phosphate (route II): step 2/2. The protein operates within nucleotide-sugar biosynthesis; UDP-N-acetyl-alpha-D-glucosamine biosynthesis; UDP-N-acetyl-alpha-D-glucosamine from N-acetyl-alpha-D-glucosamine 1-phosphate: step 1/1. Its pathway is bacterial outer membrane biogenesis; LPS lipid A biosynthesis. Catalyzes the last two sequential reactions in the de novo biosynthetic pathway for UDP-N-acetylglucosamine (UDP-GlcNAc). The C-terminal domain catalyzes the transfer of acetyl group from acetyl coenzyme A to glucosamine-1-phosphate (GlcN-1-P) to produce N-acetylglucosamine-1-phosphate (GlcNAc-1-P), which is converted into UDP-GlcNAc by the transfer of uridine 5-monophosphate (from uridine 5-triphosphate), a reaction catalyzed by the N-terminal domain. The sequence is that of Bifunctional protein GlmU from Granulibacter bethesdensis (strain ATCC BAA-1260 / CGDNIH1).